We begin with the raw amino-acid sequence, 274 residues long: Glutamate racemase (274 aa).

Residues 10–11 (DS) and 42–43 (YG) contribute to the substrate site. Cys-73 (proton donor/acceptor) is an active-site residue. 74–75 (NT) is a substrate binding site. Catalysis depends on Cys-184, which acts as the Proton donor/acceptor. Substrate is bound at residue 185–186 (TH).

The protein belongs to the aspartate/glutamate racemases family.

The enzyme catalyses L-glutamate = D-glutamate. It participates in cell wall biogenesis; peptidoglycan biosynthesis. In terms of biological role, provides the (R)-glutamate required for cell wall biosynthesis. In Latilactobacillus sakei subsp. sakei (strain 23K) (Lactobacillus sakei subsp. sakei), this protein is Glutamate racemase.